A 441-amino-acid chain; its full sequence is Ribosomal protein uS12 methylthiotransferase RimO (441 aa).

Residues 7–117 (PKISFVSLGC…VLEAVHRALP (111 aa)) enclose the MTTase N-terminal domain. The [4Fe-4S] cluster site is built by cysteine 16, cysteine 52, cysteine 81, cysteine 148, cysteine 152, and cysteine 155. In terms of domain architecture, Radical SAM core spans 134–371 (LTPRHYAYLK…MARQQKISAR (238 aa)). In terms of domain architecture, TRAM spans 374–440 (KRKVGTRQQV…AYDLHGTVAG (67 aa)).

The protein belongs to the methylthiotransferase family. RimO subfamily. Requires [4Fe-4S] cluster as cofactor.

It is found in the cytoplasm. The catalysed reaction is L-aspartate(89)-[ribosomal protein uS12]-hydrogen + (sulfur carrier)-SH + AH2 + 2 S-adenosyl-L-methionine = 3-methylsulfanyl-L-aspartate(89)-[ribosomal protein uS12]-hydrogen + (sulfur carrier)-H + 5'-deoxyadenosine + L-methionine + A + S-adenosyl-L-homocysteine + 2 H(+). In terms of biological role, catalyzes the methylthiolation of an aspartic acid residue of ribosomal protein uS12. The protein is Ribosomal protein uS12 methylthiotransferase RimO of Rhodopseudomonas palustris (strain BisA53).